Consider the following 284-residue polypeptide: Tropomyosin (284 aa).

The stretch at 1-284 (MDAIKKKMVA…DATFAELAGY (284 aa)) forms a coiled coil. A compositionally biased stretch (basic and acidic residues) spans 32–41 (TEEAKAKIED). The disordered stretch occupies residues 32-60 (TEEAKAKIEDDYNSLQKKSIQTENDLDNT). Over residues 44 to 60 (NSLQKKSIQTENDLDNT) the composition is skewed to polar residues.

It belongs to the tropomyosin family. In terms of assembly, homodimer.

In terms of biological role, tropomyosin, in association with the troponin complex, plays a central role in the calcium dependent regulation of muscle contraction. This is Tropomyosin from Mytilus edulis (Blue mussel).